The sequence spans 156 residues: ATP synthase subunit b (156 aa).

The helical transmembrane segment at 7–27 threads the bilayer; sequence LIGELIAFTVFVLFCMKFVWP.

This sequence belongs to the ATPase B chain family. As to quaternary structure, F-type ATPases have 2 components, F(1) - the catalytic core - and F(0) - the membrane proton channel. F(1) has five subunits: alpha(3), beta(3), gamma(1), delta(1), epsilon(1). F(0) has three main subunits: a(1), b(2) and c(10-14). The alpha and beta chains form an alternating ring which encloses part of the gamma chain. F(1) is attached to F(0) by a central stalk formed by the gamma and epsilon chains, while a peripheral stalk is formed by the delta and b chains.

It is found in the cell inner membrane. In terms of biological role, f(1)F(0) ATP synthase produces ATP from ADP in the presence of a proton or sodium gradient. F-type ATPases consist of two structural domains, F(1) containing the extramembraneous catalytic core and F(0) containing the membrane proton channel, linked together by a central stalk and a peripheral stalk. During catalysis, ATP synthesis in the catalytic domain of F(1) is coupled via a rotary mechanism of the central stalk subunits to proton translocation. Functionally, component of the F(0) channel, it forms part of the peripheral stalk, linking F(1) to F(0). This Pseudoalteromonas translucida (strain TAC 125) protein is ATP synthase subunit b.